A 199-amino-acid chain; its full sequence is Fe/S biogenesis protein NfuA (199 aa).

Cys-151 and Cys-154 together coordinate [4Fe-4S] cluster.

Belongs to the NfuA family. In terms of assembly, homodimer. Requires [4Fe-4S] cluster as cofactor.

In terms of biological role, involved in iron-sulfur cluster biogenesis. Binds a 4Fe-4S cluster, can transfer this cluster to apoproteins, and thereby intervenes in the maturation of Fe/S proteins. Could also act as a scaffold/chaperone for damaged Fe/S proteins. The polypeptide is Fe/S biogenesis protein NfuA (Xylella fastidiosa (strain 9a5c)).